Consider the following 216-residue polypeptide: Large ribosomal subunit protein uL3 (216 aa).

Residues 134-153 (RATHGNSRSHNVPGSIGMAQ) are disordered. At glutamine 153 the chain carries N5-methylglutamine.

This sequence belongs to the universal ribosomal protein uL3 family. Part of the 50S ribosomal subunit. Forms a cluster with proteins L14 and L19. In terms of processing, methylated by PrmB.

In terms of biological role, one of the primary rRNA binding proteins, it binds directly near the 3'-end of the 23S rRNA, where it nucleates assembly of the 50S subunit. The sequence is that of Large ribosomal subunit protein uL3 from Cupriavidus pinatubonensis (strain JMP 134 / LMG 1197) (Cupriavidus necator (strain JMP 134)).